Here is a 69-residue protein sequence, read N- to C-terminus: uncharacterized protein (69 aa).

Positions 1–16 (MKKIMLFLAMTSILSA) are cleaved as a signal peptide. Cys17 carries N-palmitoyl cysteine lipidation. The S-diacylglycerol cysteine moiety is linked to residue Cys17.

It localises to the cell membrane. This is an uncharacterized protein from Bacillus subtilis (strain 168).